Reading from the N-terminus, the 1458-residue chain is ABC multidrug transporter B (1458 aa).

5 helical membrane-spanning segments follow: residues 30–50 (FSLLFEELILGILPLGIVLII), 70–90 (LLWAKITAWLALGIVQLVLAV), 102–122 (ASIAANAIITVGFFILCLLSC), 128–148 (STTPSFLLNIYLLFTLLFDIA), and 165–185 (IAILTSVTVGIKFLLLILEAV). Asn208 carries N-linked (GlcNAc...) asparagine glycosylation. Residues 273–295 (WPLLSAVPPRACLAALNFCQPLL) traverse the membrane as a helical segment. Residues 283 to 561 (ACLAALNFCQ…LVMALMTFVG (279 aa)) form the ABC transmembrane type-1 1 domain. The N-linked (GlcNAc...) asparagine glycan is linked to Asn309. Transmembrane regions (helical) follow at residues 314-334 (IGYGLIGAYILVYIGMGVTMG), 387-407 (WQTIHDIWGNAAEIALAIYLL), 411-431 (LGVACVVPVGVALVALIGCLI), 501-521 (LGWTTRIFAPIFALGAFYGIM), and 541-561 (LFALLADPLLSLVMALMTFVG). One can recognise an ABC transporter 1 domain in the interval 626-853 (LTVKNATFAW…AGGYVSSFGL (228 aa)). N-linked (GlcNAc...) asparagine glycosylation occurs at Asn630. 660–667 (GPSGCGKS) is an ATP binding site. Residues Asn702, Asn804, and Asn879 are each glycosylated (N-linked (GlcNAc...) asparagine). Positions 933-1182 (PNGRTGYYLG…LVTFWTNLET (250 aa)) constitute an ABC transmembrane type-1 2 domain. The next 6 helical transmembrane spans lie at 940–960 (YLGIYAMLGAVGMLSLIIGCW), 978–998 (LLATVLNAPMSFFAATDSGSI), 1016–1036 (AAINTFATLILCLAQMILMGI), 1040–1060 (YAAISFPLVILAVYSIQKVYL), 1125–1145 (LTLTLDMVVAAIAVILIVLVV), and 1156–1176 (VGVALLNVILFSQSIKLLVTF). The region spanning 1219–1449 (IEFKSVSAEY…EGSYFSRLYA (231 aa)) is the ABC transporter 2 domain. Residue 1252–1259 (GRTGSGKT) participates in ATP binding. Asn1316 carries an N-linked (GlcNAc...) asparagine glycan.

The protein belongs to the ABC transporter superfamily. ABCC family. Conjugate transporter (TC 3.A.1.208) subfamily.

It is found in the cell membrane. In terms of biological role, pleiotropic ABC efflux transporter that may be involved in A.fumigatus adaptation to azoles such as vorizonazole. This is ABC multidrug transporter B from Aspergillus fumigatus (strain ATCC MYA-4609 / CBS 101355 / FGSC A1100 / Af293) (Neosartorya fumigata).